The sequence spans 521 residues: Bifunctional purine biosynthesis protein PurH (521 aa).

Residues 1–147 (MAKITRALIS…KNNADVTVLV (147 aa)) form the MGS-like domain.

It belongs to the PurH family.

The catalysed reaction is (6R)-10-formyltetrahydrofolate + 5-amino-1-(5-phospho-beta-D-ribosyl)imidazole-4-carboxamide = 5-formamido-1-(5-phospho-D-ribosyl)imidazole-4-carboxamide + (6S)-5,6,7,8-tetrahydrofolate. It carries out the reaction IMP + H2O = 5-formamido-1-(5-phospho-D-ribosyl)imidazole-4-carboxamide. The protein operates within purine metabolism; IMP biosynthesis via de novo pathway; 5-formamido-1-(5-phospho-D-ribosyl)imidazole-4-carboxamide from 5-amino-1-(5-phospho-D-ribosyl)imidazole-4-carboxamide (10-formyl THF route): step 1/1. It functions in the pathway purine metabolism; IMP biosynthesis via de novo pathway; IMP from 5-formamido-1-(5-phospho-D-ribosyl)imidazole-4-carboxamide: step 1/1. The polypeptide is Bifunctional purine biosynthesis protein PurH (Geobacter sulfurreducens (strain ATCC 51573 / DSM 12127 / PCA)).